Reading from the N-terminus, the 147-residue chain is Large ribosomal subunit protein uL15 (147 aa).

Residues 1–15 (MKLHELKPAKGAVKE) show a composition bias toward basic and acidic residues. The segment at 1 to 47 (MKLHELKPAKGAVKEVKRKGRGRATGNGKTAGRGHNGQNSRSGGGVR) is disordered. The span at 23–35 (RATGNGKTAGRGH) shows a compositional bias: gly residues.

Belongs to the universal ribosomal protein uL15 family. In terms of assembly, part of the 50S ribosomal subunit.

Binds to the 23S rRNA. This Alkaliphilus metalliredigens (strain QYMF) protein is Large ribosomal subunit protein uL15.